The primary structure comprises 235 residues: Thaumatin II (235 aa).

The signal sequence occupies residues 1 to 22 (MAATTCFFFLFPFLLLLTLSRA). Cystine bridges form between cysteine 31–cysteine 226, cysteine 78–cysteine 88, cysteine 93–cysteine 99, cysteine 143–cysteine 215, cysteine 148–cysteine 199, cysteine 156–cysteine 167, cysteine 171–cysteine 180, and cysteine 181–cysteine 186. Positions 230-235 (LELEDE) are cleaved as a propeptide — removed in mature form.

It belongs to the thaumatin family.

It localises to the cytoplasmic vesicle. Its function is as follows. Taste-modifying protein; intensely sweet-tasting. It is 100000 times sweeter than sucrose on a molar basis. The polypeptide is Thaumatin II (Thaumatococcus daniellii (Katemfe)).